We begin with the raw amino-acid sequence, 289 residues long: 4-diphosphocytidyl-2-C-methyl-D-erythritol kinase (289 aa).

Residue lysine 10 is part of the active site. An ATP-binding site is contributed by 94–104 (PVAAGLAGGSS). Aspartate 136 is an active-site residue.

Belongs to the GHMP kinase family. IspE subfamily.

The enzyme catalyses 4-CDP-2-C-methyl-D-erythritol + ATP = 4-CDP-2-C-methyl-D-erythritol 2-phosphate + ADP + H(+). It participates in isoprenoid biosynthesis; isopentenyl diphosphate biosynthesis via DXP pathway; isopentenyl diphosphate from 1-deoxy-D-xylulose 5-phosphate: step 3/6. Catalyzes the phosphorylation of the position 2 hydroxy group of 4-diphosphocytidyl-2C-methyl-D-erythritol. This chain is 4-diphosphocytidyl-2-C-methyl-D-erythritol kinase, found in Bacillus licheniformis (strain ATCC 14580 / DSM 13 / JCM 2505 / CCUG 7422 / NBRC 12200 / NCIMB 9375 / NCTC 10341 / NRRL NRS-1264 / Gibson 46).